The primary structure comprises 417 residues: Gelsolin (417 aa).

Residues 93-171 form a Gelsolin-like 4 repeat; the sequence is KVPVLESHYG…VVQGKEPAHL (79 aa). Ca(2+) contacts are provided by glycine 107, aspartate 108, glutamate 138, aspartate 150, glycine 155, proline 157, threonine 187, asparagine 227, aspartate 228, glutamate 250, aspartate 331, aspartate 332, and glutamate 354. Gelsolin-like repeat units lie at residues 213–261 and 316–392; these read RAVE…LKIL and IEEV…PTFI.

It belongs to the villin/gelsolin family.

It localises to the cytoplasm. The protein localises to the cytoskeleton. In terms of biological role, calcium-regulated, actin-modulating protein that binds to the plus (or barbed) ends of actin monomers or filaments, preventing monomer exchange (end-blocking or capping). It can promote the assembly of monomers into filaments (nucleation) as well as sever filaments already formed. Plays a role in ciliogenesis. The sequence is that of Gelsolin (gsn) from Xenopus laevis (African clawed frog).